The primary structure comprises 161 residues: Putative acetyltransferase SAR0816 (161 aa).

This sequence belongs to the transferase hexapeptide repeat family.

This Staphylococcus aureus (strain MRSA252) protein is Putative acetyltransferase SAR0816.